The primary structure comprises 267 residues: Small ribosomal subunit protein uS2 (267 aa).

The disordered stretch occupies residues 1–72; it reads MSGNEKEGLD…QLDEDVMPDE (72 aa). The span at 10 to 72 shows a compositional bias: acidic residues; sequence DASDSDFDPS…QLDEDVMPDE (63 aa).

This sequence belongs to the universal ribosomal protein uS2 family. Post-translationally, the N-terminus is blocked.

This Haloarcula marismortui (strain ATCC 43049 / DSM 3752 / JCM 8966 / VKM B-1809) (Halobacterium marismortui) protein is Small ribosomal subunit protein uS2 (rps2).